The chain runs to 395 residues: NAD(P)H-quinone oxidoreductase subunit H, chloroplastic (395 aa).

It belongs to the complex I 49 kDa subunit family. NDH is composed of at least 16 different subunits, 5 of which are encoded in the nucleus.

It localises to the plastid. The protein resides in the chloroplast thylakoid membrane. It carries out the reaction a plastoquinone + NADH + (n+1) H(+)(in) = a plastoquinol + NAD(+) + n H(+)(out). The catalysed reaction is a plastoquinone + NADPH + (n+1) H(+)(in) = a plastoquinol + NADP(+) + n H(+)(out). Its function is as follows. NDH shuttles electrons from NAD(P)H:plastoquinone, via FMN and iron-sulfur (Fe-S) centers, to quinones in the photosynthetic chain and possibly in a chloroplast respiratory chain. The immediate electron acceptor for the enzyme in this species is believed to be plastoquinone. Couples the redox reaction to proton translocation, and thus conserves the redox energy in a proton gradient. This chain is NAD(P)H-quinone oxidoreductase subunit H, chloroplastic, found in Staurastrum punctulatum (Green alga).